The sequence spans 162 residues: UPF0262 protein Acry_0160 (162 aa).

It belongs to the UPF0262 family.

The chain is UPF0262 protein Acry_0160 from Acidiphilium cryptum (strain JF-5).